The sequence spans 324 residues: Elongation factor Ts, mitochondrial (324 aa).

A mitochondrion-targeting transit peptide spans 1 to 44; it reads MSLLRSLRFFPVACTGRSARAVLLQPSQPWLTFHAGPSLSSAAS. N6-succinyllysine is present on residues Lys75, Lys132, and Lys191. Ser269 carries the phosphoserine modification.

This sequence belongs to the EF-Ts family.

It localises to the mitochondrion. In terms of biological role, associates with the EF-Tu.GDP complex and induces the exchange of GDP to GTP. It remains bound to the aminoacyl-tRNA.EF-Tu.GTP complex up to the GTP hydrolysis stage on the ribosome. This Mus musculus (Mouse) protein is Elongation factor Ts, mitochondrial (Tsfm).